The sequence spans 550 residues: Glucose-6-phosphate isomerase (550 aa).

The Proton donor role is filled by E356. Active-site residues include H387 and K515.

The protein belongs to the GPI family.

It localises to the cytoplasm. It catalyses the reaction alpha-D-glucose 6-phosphate = beta-D-fructose 6-phosphate. The protein operates within carbohydrate biosynthesis; gluconeogenesis. It functions in the pathway carbohydrate degradation; glycolysis; D-glyceraldehyde 3-phosphate and glycerone phosphate from D-glucose: step 2/4. Its function is as follows. Catalyzes the reversible isomerization of glucose-6-phosphate to fructose-6-phosphate. The chain is Glucose-6-phosphate isomerase from Aliivibrio salmonicida (strain LFI1238) (Vibrio salmonicida (strain LFI1238)).